Here is a 295-residue protein sequence, read N- to C-terminus: 33 kDa chaperonin (295 aa).

2 disulfide bridges follow: C238-C240 and C271-C274.

It belongs to the HSP33 family. Under oxidizing conditions two disulfide bonds are formed involving the reactive cysteines. Under reducing conditions zinc is bound to the reactive cysteines and the protein is inactive.

The protein resides in the cytoplasm. In terms of biological role, redox regulated molecular chaperone. Protects both thermally unfolding and oxidatively damaged proteins from irreversible aggregation. Plays an important role in the bacterial defense system toward oxidative stress. In Clostridium botulinum (strain Alaska E43 / Type E3), this protein is 33 kDa chaperonin.